The following is a 186-amino-acid chain: Large ribosomal subunit protein uL22 (186 aa).

The interval 160 to 186 is disordered; it reads AAENEPAKKKLSKKKLQRQKEKMMRNE. The segment covering 177 to 186 has biased composition (basic and acidic residues); sequence RQKEKMMRNE.

Belongs to the universal ribosomal protein uL22 family.

This Aedes aegypti (Yellowfever mosquito) protein is Large ribosomal subunit protein uL22 (RpL17).